Consider the following 197-residue polypeptide: dTTP/UTP pyrophosphatase (197 aa).

Asp70 serves as the catalytic Proton acceptor.

It belongs to the Maf family. YhdE subfamily. A divalent metal cation serves as cofactor.

Its subcellular location is the cytoplasm. It carries out the reaction dTTP + H2O = dTMP + diphosphate + H(+). It catalyses the reaction UTP + H2O = UMP + diphosphate + H(+). Nucleoside triphosphate pyrophosphatase that hydrolyzes dTTP and UTP. May have a dual role in cell division arrest and in preventing the incorporation of modified nucleotides into cellular nucleic acids. This chain is dTTP/UTP pyrophosphatase, found in Pectobacterium atrosepticum (strain SCRI 1043 / ATCC BAA-672) (Erwinia carotovora subsp. atroseptica).